We begin with the raw amino-acid sequence, 432 residues long: MQVSVETTQGLGRRVTITIAADSIETAVKSELVNVAKKVRIDGFRKGKVPMNVVAQRYGASVRQDVLGDLMSRNFVDAIIKEKINPAGAPNYVPGEYKLGEDFTYAVEFEVYPEVELTGLESIEVEKPVVEVTDADVDVMLDTLRKQQATWKDKDGAADAEDRVTIDFTGSVDGEEFEGGKASDFVLAMGQGRMIPGFEDGIKGHKAGEEFTIDVTFPEEYHAENLKGKAAKFAINLKKVEERELPELTEEFIKRFGVEDGSVAGLRTEVRKNMERELKGAVRNRVKSQAIEGLVKANDIDVPSALIDSEVDVLRRQAAQRFGGNEKQALELPRELFEEQAKRRVVVGLLLGEVIRTQELKADEERVKGLIEEMASAYEDPKEVIEFYSKNKELMDNMRNVALEEQAVEAVLAKAKVTEKATSFNELMNQQA.

In terms of domain architecture, PPIase FKBP-type spans Glu161–Pro246.

Belongs to the FKBP-type PPIase family. Tig subfamily.

It localises to the cytoplasm. The enzyme catalyses [protein]-peptidylproline (omega=180) = [protein]-peptidylproline (omega=0). In terms of biological role, involved in protein export. Acts as a chaperone by maintaining the newly synthesized protein in an open conformation. Functions as a peptidyl-prolyl cis-trans isomerase. The sequence is that of Trigger factor from Citrobacter koseri (strain ATCC BAA-895 / CDC 4225-83 / SGSC4696).